The following is a 442-amino-acid chain: D-serine dehydratase (442 aa).

Lys-118 carries the post-translational modification N6-(pyridoxal phosphate)lysine.

This sequence belongs to the serine/threonine dehydratase family. DsdA subfamily. As to quaternary structure, monomer. Pyridoxal 5'-phosphate serves as cofactor.

It carries out the reaction D-serine = pyruvate + NH4(+). The chain is D-serine dehydratase from Shigella sonnei (strain Ss046).